We begin with the raw amino-acid sequence, 312 residues long: MKVAVLGAAGGIGQALALLLKTQLPSGSELSLYDIAPVTPGVAVDLSHIPTAVKIKGFSGEDATPALEGADVVLISAGVARKPGMDRSDLFNVNAGIVKNLVQQIATTCPKACVGIITNPVNTTVAIAAEVLKKAGVYDKNKLFGVTTLDIIRSNTFVAELKGKLPTDVEVPVIGGHSGVTILPLLSQIPGVSFTEQEVADLTKRIQNAGTEVVEAKAGGGSATLSMGQAAARFGLSLVRALQGEKDVVECAYVEGDGQYARFFSQPLLLGKNGVEERKSIGKLSAFEQNALEGMLDTLKKDIALGEEFVNK.

NAD(+) contacts are provided by residues 7 to 13 and D34; that span reads GAAGGIG. 2 residues coordinate substrate: R81 and R87. NAD(+)-binding positions include N94 and 117–119; that span reads ITN. 2 residues coordinate substrate: N119 and R153. H177 serves as the catalytic Proton acceptor. M227 is a binding site for NAD(+).

It belongs to the LDH/MDH superfamily. MDH type 1 family. In terms of assembly, homodimer.

It carries out the reaction (S)-malate + NAD(+) = oxaloacetate + NADH + H(+). Its function is as follows. Catalyzes the reversible oxidation of malate to oxaloacetate. This is Malate dehydrogenase from Citrobacter koseri (strain ATCC BAA-895 / CDC 4225-83 / SGSC4696).